Reading from the N-terminus, the 95-residue chain is Aspartyl/glutamyl-tRNA(Asn/Gln) amidotransferase subunit C (95 aa).

It belongs to the GatC family. As to quaternary structure, heterotrimer of A, B and C subunits.

The enzyme catalyses L-glutamyl-tRNA(Gln) + L-glutamine + ATP + H2O = L-glutaminyl-tRNA(Gln) + L-glutamate + ADP + phosphate + H(+). The catalysed reaction is L-aspartyl-tRNA(Asn) + L-glutamine + ATP + H2O = L-asparaginyl-tRNA(Asn) + L-glutamate + ADP + phosphate + 2 H(+). In terms of biological role, allows the formation of correctly charged Asn-tRNA(Asn) or Gln-tRNA(Gln) through the transamidation of misacylated Asp-tRNA(Asn) or Glu-tRNA(Gln) in organisms which lack either or both of asparaginyl-tRNA or glutaminyl-tRNA synthetases. The reaction takes place in the presence of glutamine and ATP through an activated phospho-Asp-tRNA(Asn) or phospho-Glu-tRNA(Gln). This is Aspartyl/glutamyl-tRNA(Asn/Gln) amidotransferase subunit C from Laribacter hongkongensis (strain HLHK9).